The chain runs to 145 residues: Large ribosomal subunit protein uL11 (145 aa).

The protein belongs to the universal ribosomal protein uL11 family. As to quaternary structure, part of the ribosomal stalk of the 50S ribosomal subunit. Interacts with L10 and the large rRNA to form the base of the stalk. L10 forms an elongated spine to which L12 dimers bind in a sequential fashion forming a multimeric L10(L12)X complex. In terms of processing, one or more lysine residues are methylated.

Its function is as follows. Forms part of the ribosomal stalk which helps the ribosome interact with GTP-bound translation factors. The polypeptide is Large ribosomal subunit protein uL11 (Porphyromonas gingivalis (strain ATCC 33277 / DSM 20709 / CIP 103683 / JCM 12257 / NCTC 11834 / 2561)).